We begin with the raw amino-acid sequence, 325 residues long: Adenine deaminase (325 aa).

Zn(2+) contacts are provided by His11, His13, and His189. Catalysis depends on Glu192, which acts as the Proton donor. Position 270 (Asp270) interacts with Zn(2+). Residue Asp271 coordinates substrate.

This sequence belongs to the metallo-dependent hydrolases superfamily. Adenosine and AMP deaminases family. Adenine deaminase type 2 subfamily. Zn(2+) is required as a cofactor.

The enzyme catalyses adenine + H2O + H(+) = hypoxanthine + NH4(+). Catalyzes the hydrolytic deamination of adenine to hypoxanthine. Plays an important role in the purine salvage pathway and in nitrogen catabolism. This Agrobacterium fabrum (strain C58 / ATCC 33970) (Agrobacterium tumefaciens (strain C58)) protein is Adenine deaminase.